Here is a 2549-residue protein sequence, read N- to C-terminus: Serine/threonine-protein kinase mTOR (2549 aa).

An N-acetylmethionine modification is found at M1. The segment at 1-651 is interaction with NBN; that stretch reads MLGTGPAAAT…HVVSQTAVQV (651 aa). 32 HEAT repeats span residues 16–53, 55–99, 100–137, 138–179, 180–220, 222–276, 277–313, 314–364, 365–409, 410–445, 446–494, 495–529, 530–563, 564–596, 597–636, 637–683, 686–724, 727–766, 769–811, 814–853, 857–893, 894–942, 943–988, 989–1027, 1029–1068, 1069–1105, 1106–1144, 1145–1188, 1189–1225, 1226–1273, 1274–1311, and 1312–1345; these read SSNV…MELR, MSQE…VEGG, NATR…AMAG, DTFT…AISV, PTFF…LILT, QREP…RISS, MEGE…PRHI, TPFT…CCRD, LMEE…AFTD, TQYL…VAVR, SEFK…RAMG, PGIQ…RQIP, QLKK…GLAH, QLAS…EFEG, HSLT…SIHL, ISGH…DERF, HLAQ…MNPA, MPFL…NAPR, RPYM…VSGL, RKWV…STGY, PYRK…LLGA, LDPY…GNLP, LDEF…KCVQ, FLPQ…KSHI, PYMD…GEFK, LYLP…LFGA, NLDD…RLTE, SLDF…GKKY, QIFI…LADE, EEDP…GAAR, RVSK…QAYN, and PMAR…ELAL. At S567 the chain carries Phosphoserine. Position 1162 is a phosphothreonine (T1162). K1218 carries the post-translational modification N6-acetyllysine. S1261 is subject to Phosphoserine. TPR repeat units lie at residues 1346–1382, 1383–1408, 1409–1442, 1443–1473, 1474–1507, 1508–1541, 1542–1574, 1575–1614, 1615–1649, 1650–1693, 1694–1731, 1732–1786, 1787–1846, 1898–1930, 1931–1970, and 1971–2005; these read TSQD…GIVL, LGER…QKGP, TPAI…HFGE, LEIQ…NKDD, PELM…VNDE, TQAK…RDTH, DGAF…LDAE, LTAM…RREI, IRQI…PHED, MRTW…PTVH, PQVT…AQHA, IATE…DRSW, YKAW…STEG, NNLQ…VKAI, QIDT…YHPQ, and ALIY…SNTL. Positions 1382–1982 constitute an FAT domain; the sequence is LLGERAAKCR…IYPLTVASKS (601 aa). 1D-myo-inositol hexakisphosphate is bound by residues K1662, K1702, and R1749. The disordered stretch occupies residues 1812 to 1867; that stretch reads DEKKKLRHASGANITNATTAATTAATATTTASTEGSNSESEAESTENSPTPSPLQK. Residues 1820-1860 are compositionally biased toward low complexity; sequence ASGANITNATTAATTAATATTTASTEGSNSESEAESTENSP. The sufficient for interaction with the FKBP1A/rapamycin complex stretch occupies residues 2012 to 2144; sequence VSEELIRVAI…DLELAVPGTY (133 aa). K2066 is covalently cross-linked (Glycyl lysine isopeptide (Lys-Gly) (interchain with G-Cter in ubiquitin)). One can recognise a PI3K/PI4K catalytic domain in the interval 2156–2469; the sequence is IAPSLQVITS…GVELGEPAHK (314 aa). S2159 carries the phosphoserine; by TBK1 modification. The segment at 2162 to 2168 is G-loop; that stretch reads VITSKQR. T2164 carries the phosphothreonine modification. ATP is bound by residues S2165 and Q2167. T2173 carries the post-translational modification Phosphothreonine; by PKB/AKT1. ATP-binding residues include L2185, K2187, E2190, Y2225, G2238, W2239, V2240, and T2245. The interval 2258–2296 is interaction with MLST8; sequence KILLNIEHRIMLRMAPDYDHLTLMQKVEVFEHAVNNTAG. The tract at residues 2335–2343 is catalytic loop; it reads GLGDRHPSN. Residue N2343 participates in Mg(2+) binding. Residues M2345 and I2356 each coordinate ATP. Residues 2355 to 2380 form an activation loop region; the sequence is HIDFGDCFEVAMTREKFPEKIPFRLT. Residue D2357 participates in Mg(2+) binding. T2446 is modified (phosphothreonine; by RPS6KB1). S2448 is modified (phosphoserine; by RPS6KB1). S2478 is subject to Phosphoserine. The residue at position 2481 (S2481) is a Phosphoserine; by autocatalysis. In terms of domain architecture, FATC spans 2517–2549; the sequence is DTLDVPTQVELLIKQATSHENLCQCYIGWCPFW.

Belongs to the PI3/PI4-kinase family. In terms of assembly, part of the mechanistic target of rapamycin complex 1 (mTORC1) which contains MTOR, MLST8 and RPTOR. The mTORC1 complex is a 1 Md obligate dimer of two stoichiometric heterotetramers with overall dimensions of 290 A x 210 A x 135 A. It has a rhomboid shape and a central cavity, the dimeric interfaces are formed by interlocking interactions between the two MTOR and the two RPTOR subunits. The MLST8 subunit forms distal foot-like protuberances, and contacts only one MTOR within the complex, while the small AKT1S1/PRAS40 localizes to the midsection of the central core, in close proximity to RPTOR. mTORC1 associates with AKT1S1/PRAS40, which inhibits its activity by blocking MTOR substrate-recruitment site. Component of the mechanistic target of rapamycin complex 2 (mTORC2), consisting in two heterotretramers composed of MTOR, MLST8, RICTOR and MAPKAP1/SIN1. Interacts with PLPP7 and PML. Interacts with PRR5 and RICTOR; the interaction is direct within the mTORC2 complex and interaction with RICTOR is enhanced by deubiquitination of RICTOR by USP9X. mTORC1 and mTORC2 associate with DEPTOR, which regulates their activity. Interacts with WAC; WAC positively regulates MTOR activity by promoting the assembly of the TTT complex composed of TELO2, TTI1 and TTI2 and the RUVBL complex composed of RUVBL1 and RUVBL2 into the TTT-RUVBL complex which leads to the dimerization of the mTORC1 complex and its subsequent activation. Interacts with UBQLN1. Interacts with TTI1 and TELO2. Interacts with CLIP1; phosphorylates and regulates CLIP1. Interacts with NBN. Interacts with HTR6. Interacts with BRAT1. Interacts with MEAK7 (via C-terminal domain); the interaction increases upon nutrient stimulation. Interacts with TM4SF5; the interaction is positively regulated by arginine and is negatively regulated by leucine. Interacts with GPR137B. Interacts with NCKAP1L. Interacts with TPCN1 and TPCN2; the interaction is required for TPCN1 and TPCN2 sensitivity to ATP. Interacts with ATP6V1A and with CRYAB, forming a ternary complex. Interacts with SLC38A7; this interaction mediates the recruitment of mTORC1 to the lysosome and its subsequent activation. Interacts with TSPAN8. Post-translationally, autophosphorylates when part of mTORC1 or mTORC2. Phosphorylation at Ser-1261, Ser-2159 and Thr-2164 promotes autophosphorylation. Phosphorylated at Ser-2448 by RPS6KB1. Phosphorylation in the kinase domain modulates the interactions of MTOR with RPTOR and AKT1S1/PRAS40 and leads to increased intrinsic mTORC1 kinase activity. Phosphorylation at Ser-2159 by TBK1 in response to growth factors and pathogen recognition receptors promotes mTORC1 activity. Phosphorylation at Ser-2159 by TBK1 in response to EGF growth factor promotes mTORC2 activity, leading to AKT1 phosphorylation and activation. Phosphorylation at Thr-2173 in the ATP-binding region by AKT1 strongly reduces kinase activity. In terms of processing, ubiquitinated at Lys-2066 by the SCF(FBXO22) complex via 'Lys-27'-linked ubiquitination prevents mTORC1 substrate recruitment. In terms of tissue distribution, expressed in numerous tissues, with highest levels in testis.

It is found in the lysosome membrane. It localises to the endoplasmic reticulum membrane. Its subcellular location is the golgi apparatus membrane. The protein resides in the cell membrane. The protein localises to the mitochondrion outer membrane. It is found in the cytoplasm. It localises to the nucleus. Its subcellular location is the PML body. The protein resides in the microsome membrane. The protein localises to the cytoplasmic vesicle. It is found in the phagosome. It carries out the reaction L-seryl-[protein] + ATP = O-phospho-L-seryl-[protein] + ADP + H(+). The enzyme catalyses L-threonyl-[protein] + ATP = O-phospho-L-threonyl-[protein] + ADP + H(+). The catalysed reaction is L-tyrosyl-[protein] + ATP = O-phospho-L-tyrosyl-[protein] + ADP + H(+). With respect to regulation, the mTORC1 complex is activated in response to nutrients, growth factors or amino acids: activation requires relocalization of the mTORC1 complex to lysosomes that is mediated by the Ragulator complex, SLC38A9, and the Rag GTPases RagA/RRAGA, RagB/RRAGB, RagC/RRAGC and RagD/RRAGD. Activation of mTORC1 by growth factors such as insulin involves AKT1-mediated phosphorylation of TSC1-TSC2, which leads to the activation of the RHEB GTPase a potent activator of the protein kinase activity of mTORC1. Insulin-stimulated and amino acid-dependent phosphorylation at Ser-1261 promotes autophosphorylation and the activation of mTORC1. On the other hand, low cellular energy levels can inhibit mTORC1 through activation of PRKAA1 while hypoxia inhibits mTORC1 through a REDD1-dependent mechanism which may also require PRKAA1. The kinase activity of MTOR within the mTORC1 complex is positively regulated by MLST8. The kinase activity of MTOR is inhibited by DEPTOR and AKT1S1. The non-canonical mTORC1 complex is independent of the RHEB GTPase and specifically mediates phosphorylation of MiT/TFE factors TFEB and TFE3 but not other mTORC1 substrates: it is activated by FLCN, which activates Rag GTPases RagC/RRAGC and RagD/RRAGD. MTOR is the target of the immunosuppressive and anti-cancer drug rapamycin which acts in complex with FKBP1A/FKBP12, and specifically inhibits its kinase activity. mTORC2 is also activated by growth factors, but seems to be nutrient-insensitive. mTORC2 associates and is directly activated by ribosomes. mTORC2 may also be regulated by RHEB but in an indirect manner through the PI3K signaling pathway. In terms of biological role, serine/threonine protein kinase which is a central regulator of cellular metabolism, growth and survival in response to hormones, growth factors, nutrients, energy and stress signals. MTOR directly or indirectly regulates the phosphorylation of at least 800 proteins. Functions as part of 2 structurally and functionally distinct signaling complexes mTORC1 and mTORC2 (mTOR complex 1 and 2). In response to nutrients, growth factors or amino acids, mTORC1 is recruited to the lysosome membrane and promotes protein, lipid and nucleotide synthesis by phosphorylating key regulators of mRNA translation and ribosome synthesis. This includes phosphorylation of EIF4EBP1 and release of its inhibition toward the elongation initiation factor 4E (eiF4E). Moreover, phosphorylates and activates RPS6KB1 and RPS6KB2 that promote protein synthesis by modulating the activity of their downstream targets including ribosomal protein S6, eukaryotic translation initiation factor EIF4B, and the inhibitor of translation initiation PDCD4. Stimulates the pyrimidine biosynthesis pathway, both by acute regulation through RPS6KB1-mediated phosphorylation of the biosynthetic enzyme CAD, and delayed regulation, through transcriptional enhancement of the pentose phosphate pathway which produces 5-phosphoribosyl-1-pyrophosphate (PRPP), an allosteric activator of CAD at a later step in synthesis, this function is dependent on the mTORC1 complex. Regulates ribosome synthesis by activating RNA polymerase III-dependent transcription through phosphorylation and inhibition of MAF1 an RNA polymerase III-repressor. Activates dormant ribosomes by mediating phosphorylation of SERBP1, leading to SERBP1 inactivation and reactivation of translation. In parallel to protein synthesis, also regulates lipid synthesis through SREBF1/SREBP1 and LPIN1. To maintain energy homeostasis mTORC1 may also regulate mitochondrial biogenesis through regulation of PPARGC1A. In the same time, mTORC1 inhibits catabolic pathways: negatively regulates autophagy through phosphorylation of ULK1. Under nutrient sufficiency, phosphorylates ULK1 at 'Ser-758', disrupting the interaction with AMPK and preventing activation of ULK1. Also prevents autophagy through phosphorylation of the autophagy inhibitor DAP. Also prevents autophagy by phosphorylating RUBCNL/Pacer under nutrient-rich conditions. Prevents autophagy by mediating phosphorylation of AMBRA1, thereby inhibiting AMBRA1 ability to mediate ubiquitination of ULK1 and interaction between AMBRA1 and PPP2CA. mTORC1 exerts a feedback control on upstream growth factor signaling that includes phosphorylation and activation of GRB10 a INSR-dependent signaling suppressor. Among other potential targets mTORC1 may phosphorylate CLIP1 and regulate microtubules. The mTORC1 complex is inhibited in response to starvation and amino acid depletion. The non-canonical mTORC1 complex, which acts independently of RHEB, specifically mediates phosphorylation of MiT/TFE factors MITF, TFEB and TFE3 in the presence of nutrients, promoting their cytosolic retention and inactivation. Upon starvation or lysosomal stress, inhibition of mTORC1 induces dephosphorylation and nuclear translocation of TFEB and TFE3, promoting their transcription factor activity. The mTORC1 complex regulates pyroptosis in macrophages by promoting GSDMD oligomerization. MTOR phosphorylates RPTOR which in turn inhibits mTORC1. As part of the mTORC2 complex, MTOR transduces signals from growth factors to pathways involved in proliferation, cytoskeletal organization, lipogenesis and anabolic output. In response to growth factors, mTORC2 phosphorylates and activates AGC protein kinase family members, including AKT (AKT1, AKT2 and AKT3), PKC (PRKCA, PRKCB and PRKCE) and SGK1. In contrast to mTORC1, mTORC2 is nutrient-insensitive. mTORC2 plays a critical role in AKT1 activation by mediating phosphorylation of different sites depending on the context, such as 'Thr-450', 'Ser-473', 'Ser-477' or 'Thr-479', facilitating the phosphorylation of the activation loop of AKT1 on 'Thr-308' by PDPK1/PDK1 which is a prerequisite for full activation. mTORC2 also regulates the phosphorylation of SGK1 at 'Ser-422'. mTORC2 may regulate the actin cytoskeleton, through phosphorylation of PRKCA, PXN and activation of the Rho-type guanine nucleotide exchange factors RHOA and RAC1A or RAC1B. The mTORC2 complex also phosphorylates various proteins involved in insulin signaling, such as FBXW8 and IGF2BP1. May also regulate insulin signaling by acting as a tyrosine protein kinase that catalyzes phosphorylation of IGF1R and INSR; additional evidence are however required to confirm this result in vivo. Regulates osteoclastogenesis by adjusting the expression of CEBPB isoforms. Plays an important regulatory role in the circadian clock function; regulates period length and rhythm amplitude of the suprachiasmatic nucleus (SCN) and liver clocks. This is Serine/threonine-protein kinase mTOR from Homo sapiens (Human).